Consider the following 399-residue polypeptide: Acetate kinase (399 aa).

A Mg(2+)-binding site is contributed by Asn-7. Lys-14 serves as a coordination point for ATP. Residue Arg-89 coordinates substrate. Asp-146 functions as the Proton donor/acceptor in the catalytic mechanism. ATP is bound by residues 206–210 (HLGNG), 280–282 (DMR), and 328–332 (GIGEN). Glu-382 is a binding site for Mg(2+).

This sequence belongs to the acetokinase family. Homodimer. The cofactor is Mg(2+). Requires Mn(2+) as cofactor.

The protein resides in the cytoplasm. The enzyme catalyses acetate + ATP = acetyl phosphate + ADP. It functions in the pathway metabolic intermediate biosynthesis; acetyl-CoA biosynthesis; acetyl-CoA from acetate: step 1/2. Catalyzes the formation of acetyl phosphate from acetate and ATP. Can also catalyze the reverse reaction. The chain is Acetate kinase from Campylobacter fetus subsp. fetus (strain 82-40).